The chain runs to 228 residues: Ribosomal RNA small subunit methyltransferase G (228 aa).

S-adenosyl-L-methionine is bound by residues Gly-89, Leu-94, 140 to 141 (VE), and Arg-159.

This sequence belongs to the methyltransferase superfamily. RNA methyltransferase RsmG family.

It is found in the cytoplasm. It carries out the reaction guanosine(527) in 16S rRNA + S-adenosyl-L-methionine = N(7)-methylguanosine(527) in 16S rRNA + S-adenosyl-L-homocysteine. Functionally, specifically methylates the N7 position of guanine in position 527 of 16S rRNA. This is Ribosomal RNA small subunit methyltransferase G from Burkholderia lata (strain ATCC 17760 / DSM 23089 / LMG 22485 / NCIMB 9086 / R18194 / 383).